A 433-amino-acid chain; its full sequence is ATP-dependent protease ATPase subunit HslU (433 aa).

ATP is bound by residues valine 18, 60 to 65 (GVGKTE), aspartate 246, glutamate 311, and arginine 383.

This sequence belongs to the ClpX chaperone family. HslU subfamily. A double ring-shaped homohexamer of HslV is capped on each side by a ring-shaped HslU homohexamer. The assembly of the HslU/HslV complex is dependent on binding of ATP.

The protein localises to the cytoplasm. In terms of biological role, ATPase subunit of a proteasome-like degradation complex; this subunit has chaperone activity. The binding of ATP and its subsequent hydrolysis by HslU are essential for unfolding of protein substrates subsequently hydrolyzed by HslV. HslU recognizes the N-terminal part of its protein substrates and unfolds these before they are guided to HslV for hydrolysis. This is ATP-dependent protease ATPase subunit HslU from Rhodopseudomonas palustris (strain TIE-1).